The following is a 136-amino-acid chain: Transcription antitermination protein NusB (136 aa).

It belongs to the NusB family.

Functionally, involved in transcription antitermination. Required for transcription of ribosomal RNA (rRNA) genes. Binds specifically to the boxA antiterminator sequence of the ribosomal RNA (rrn) operons. The protein is Transcription antitermination protein NusB of Paenarthrobacter aurescens (strain TC1).